A 263-amino-acid polypeptide reads, in one-letter code: Bidirectional sugar transporter SWEET3 (263 aa).

The Extracellular portion of the chain corresponds to 1–7 (MGDKLRL). A helical membrane pass occupies residues 8 to 28 (SIGILGNGASLLLYTAPIVTF). The MtN3/slv 1 domain maps to 9 to 97 (IGILGNGASL…FIYFYYASPK (89 aa)). At 29 to 42 (SRVFKKKSTEEFSC) the chain is on the cytoplasmic side. The helical transmembrane segment at 43-63 (FPYVMTLFNCLIYTWYGLPIV) threads the bilayer. Over 64 to 71 (SHLWENLP) the chain is Extracellular. Residues 72-92 (LVTINGVGILLESIFIFIYFY) traverse the membrane as a helical segment. The Cytoplasmic portion of the chain corresponds to 93–103 (YASPKEKIKVG). A helical transmembrane segment spans residues 104 to 124 (VTFVPVIVGFGLTTAISALVF). The Extracellular portion of the chain corresponds to 125–132 (DDHRHRKS). A helical membrane pass occupies residues 133–153 (FVGSVGLVASISMYGSPLVVM). The MtN3/slv 2 domain maps to 133 to 217 (FVGSVGLVAS…ILYFKYKNKK (85 aa)). Topologically, residues 154–165 (KKVIETRSVEYM) are cytoplasmic. A helical transmembrane segment spans residues 166–186 (PFYLSFFSFLASSLWLAYGLL). Residues 187–190 (SHDL) lie on the Extracellular side of the membrane. Residues 191-211 (FLASPNMVATPLGILQLILYF) traverse the membrane as a helical segment. Residues 212 to 263 (KYKNKKDLAPTTMVITKRNDHDDKNKATLEFVVDVDRNSDTNEKNSNNASSI) lie on the Cytoplasmic side of the membrane.

Belongs to the SWEET sugar transporter family. As to quaternary structure, forms heterooligomers with SWEET11, SWEET13 and SWEET17.

It localises to the cell membrane. In terms of biological role, mediates both low-affinity uptake and efflux of sugar across the plasma membrane. In Arabidopsis thaliana (Mouse-ear cress), this protein is Bidirectional sugar transporter SWEET3.